A 507-amino-acid chain; its full sequence is Variant surface glycoprotein ILTAT 1.25 (507 aa).

Positions 1–21 (MQSQQQPVFISIILLAINTDA) are cleaved as a signal peptide. The span at 83 to 95 (EPEAAPKESRSDE) shows a compositional bias: basic and acidic residues. The disordered stretch occupies residues 83–102 (EPEAAPKESRSDETPEACKA). N-linked (GlcNAc...) asparagine glycans are attached at residues Asn141 and Asn371. Over residues 384–395 (PTKQPPAKAAAA) the composition is skewed to low complexity. A disordered region spans residues 384 to 474 (PTKQPPAKAA…KKEEECKSPN (91 aa)). A compositionally biased stretch (basic and acidic residues) spans 396–420 (PEKKSNPQKDCNKNTKKRDCKEGDG). Residues 444–455 (SAAGAGDAGASD) show a composition bias toward low complexity. Residues 456–474 (TEAKKCSDKKKEEECKSPN) are compositionally biased toward basic and acidic residues. Residue Asp484 is the site of GPI-anchor amidated aspartate attachment. Residues 485 to 507 (SSILANKQFALSVASAAFVALLF) constitute a propeptide, removed in mature form.

It is found in the cell membrane. In terms of biological role, VSG forms a coat on the surface of the parasite. The trypanosome evades the immune response of the host by expressing a series of antigenically distinct VSGs from an estimated 1000 VSG genes. The polypeptide is Variant surface glycoprotein ILTAT 1.25 (Trypanosoma brucei brucei).